A 496-amino-acid chain; its full sequence is Costunolide synthase (496 aa).

The chain crosses the membrane as a helical; Signal-anchor for type II membrane protein span at residues 4-24; the sequence is FTIFSLVVASLVFFACWALVA. Asparagine 26, asparagine 168, asparagine 280, and asparagine 412 each carry an N-linked (GlcNAc...) asparagine glycan. Residue cysteine 434 coordinates heme.

This sequence belongs to the cytochrome P450 family. It depends on heme as a cofactor. In terms of tissue distribution, expressed in floral glandular trichomes.

Its subcellular location is the membrane. It carries out the reaction germacra-1(10),4,11(13)-trien-12-oate + reduced [NADPH--hemoprotein reductase] + O2 = (+)-costunolide + oxidized [NADPH--hemoprotein reductase] + 2 H2O. Its pathway is secondary metabolite biosynthesis; terpenoid biosynthesis. Functionally, involved in the biosynthesis of germacrene-derived sesquiterpene lactones. Component of the parthenolide biosynthetic pathway; parthenolide and conjugates are promising anti-cancer drugs highly active against colon cancer cells. Hydroxylates germacrene A acid to 6-alpha-hydroxy-germacrene A acid, a precursor of sesquiterpene lactones that spontaneously undergoes a lactonization which yields costunolide. The polypeptide is Costunolide synthase (Tanacetum parthenium (Feverfew)).